The sequence spans 171 residues: Co-chaperone protein HscB homolog (171 aa).

The region spanning 2–69 is the J domain; it reads NHFELFDLPV…DSRAAYLLSL (68 aa).

The protein belongs to the HscB family. In terms of assembly, interacts with HscA and stimulates its ATPase activity.

Its function is as follows. Co-chaperone involved in the maturation of iron-sulfur cluster-containing proteins. Seems to help targeting proteins to be folded toward HscA. The polypeptide is Co-chaperone protein HscB homolog (Acinetobacter baylyi (strain ATCC 33305 / BD413 / ADP1)).